The primary structure comprises 322 residues: 4-hydroxy-3-methylbut-2-enyl diphosphate reductase (322 aa).

A [4Fe-4S] cluster-binding site is contributed by cysteine 12. Residues histidine 43 and histidine 81 each contribute to the (2E)-4-hydroxy-3-methylbut-2-enyl diphosphate site. Dimethylallyl diphosphate is bound by residues histidine 43 and histidine 81. Isopentenyl diphosphate-binding residues include histidine 43 and histidine 81. Residue cysteine 103 coordinates [4Fe-4S] cluster. Histidine 131 contacts (2E)-4-hydroxy-3-methylbut-2-enyl diphosphate. A dimethylallyl diphosphate-binding site is contributed by histidine 131. Histidine 131 contributes to the isopentenyl diphosphate binding site. The active-site Proton donor is the glutamate 133. A (2E)-4-hydroxy-3-methylbut-2-enyl diphosphate-binding site is contributed by threonine 172. Position 200 (cysteine 200) interacts with [4Fe-4S] cluster. Serine 228, asparagine 230, and serine 273 together coordinate (2E)-4-hydroxy-3-methylbut-2-enyl diphosphate. Dimethylallyl diphosphate-binding residues include serine 228, asparagine 230, and serine 273. The isopentenyl diphosphate site is built by serine 228, asparagine 230, and serine 273.

Belongs to the IspH family. It depends on [4Fe-4S] cluster as a cofactor.

The catalysed reaction is isopentenyl diphosphate + 2 oxidized [2Fe-2S]-[ferredoxin] + H2O = (2E)-4-hydroxy-3-methylbut-2-enyl diphosphate + 2 reduced [2Fe-2S]-[ferredoxin] + 2 H(+). It catalyses the reaction dimethylallyl diphosphate + 2 oxidized [2Fe-2S]-[ferredoxin] + H2O = (2E)-4-hydroxy-3-methylbut-2-enyl diphosphate + 2 reduced [2Fe-2S]-[ferredoxin] + 2 H(+). It functions in the pathway isoprenoid biosynthesis; dimethylallyl diphosphate biosynthesis; dimethylallyl diphosphate from (2E)-4-hydroxy-3-methylbutenyl diphosphate: step 1/1. Its pathway is isoprenoid biosynthesis; isopentenyl diphosphate biosynthesis via DXP pathway; isopentenyl diphosphate from 1-deoxy-D-xylulose 5-phosphate: step 6/6. Catalyzes the conversion of 1-hydroxy-2-methyl-2-(E)-butenyl 4-diphosphate (HMBPP) into a mixture of isopentenyl diphosphate (IPP) and dimethylallyl diphosphate (DMAPP). Acts in the terminal step of the DOXP/MEP pathway for isoprenoid precursor biosynthesis. This chain is 4-hydroxy-3-methylbut-2-enyl diphosphate reductase, found in Macrococcus caseolyticus (strain JCSC5402) (Macrococcoides caseolyticum).